The sequence spans 417 residues: MKAVVLGSGVVGLMSAWYLQKSGYQVTVVDRQARSAEETSFANAGQISYGYSSPWAAPGIPQKALRWLMEEHAPLKIKPSLDPQLLKWATQMLANCQLSRYQVNKARMLAIANHSRECLSQLRQEHDIEYQGRQQGTLQIFRTQKQLIAIEKDIALLEQSGTRYQRMSVDECIKQEPGLAAVSHKLTGGLYLPDDETGDCYLFCQQMTELAQQQGVTFLFNTNVKKVNAQGNQVVSVSTDAGELQADVYVVAMGSYSTALLAQLGITIPVYPVKGYSLTVPITDESQAPVSTVMDETYKVALTRFDDRIRVAGTAELAGFDPAIPEKRKATISMVVNDLFPHSGDFAKAEFWTGFRPMTPDGTPLIGKTPLKNLYTNTGHGTLGWTMACGSGHLLSQIITGEQSENQAGLDLFRYAS.

3–17 contributes to the FAD binding site; the sequence is AVVLGSGVVGLMSAW.

This sequence belongs to the DadA oxidoreductase family. FAD serves as cofactor.

The catalysed reaction is a D-alpha-amino acid + A + H2O = a 2-oxocarboxylate + AH2 + NH4(+). Oxidative deamination of D-amino acids. This is D-amino acid dehydrogenase from Vibrio vulnificus (strain YJ016).